The following is a 63-amino-acid chain: U-reduvitoxin-Pr4a (63 aa).

The first 19 residues, 1 to 19, serve as a signal peptide directing secretion; the sequence is MKIFGLFLLIATYMALAFA. 3 disulfides stabilise this stretch: Cys24–Cys40, Cys31–Cys45, and Cys39–Cys52.

Belongs to the venom Ptu1-like knottin family. As to expression, expressed by the venom gland.

It is found in the secreted. Binds reversibly and blocks P/Q-type voltage-gated calcium channels (Cav). The protein is U-reduvitoxin-Pr4a of Platymeris rhadamanthus (Red spot assassin bug).